Reading from the N-terminus, the 303-residue chain is tRNA dimethylallyltransferase (303 aa).

11–18 (GPTGVGKS) is a binding site for ATP. 13-18 (TGVGKS) contributes to the substrate binding site. Interaction with substrate tRNA stretches follow at residues 36-39 (DSRQ) and 159-163 (QRVLR).

Belongs to the IPP transferase family. In terms of assembly, monomer. The cofactor is Mg(2+).

The catalysed reaction is adenosine(37) in tRNA + dimethylallyl diphosphate = N(6)-dimethylallyladenosine(37) in tRNA + diphosphate. Its function is as follows. Catalyzes the transfer of a dimethylallyl group onto the adenine at position 37 in tRNAs that read codons beginning with uridine, leading to the formation of N6-(dimethylallyl)adenosine (i(6)A). The chain is tRNA dimethylallyltransferase from Lawsonia intracellularis (strain PHE/MN1-00).